We begin with the raw amino-acid sequence, 279 residues long: MSKADFIFKKNIKKILTDGVWSEQARPKYKNGKTANSKYITGAFAEYDLAKGEFPITTLRPIAIKSAIKEVFWIYQDQTNELAILNDKYGVRYWNDWEVKQTGTIGERYGAIVKKHDIMNKILKQLEENPWNRRNVISLWDYEAFEKTEGLLPCAFQIMFDVRRVKGEIYLDATLTQRSNDMLVAHHINAMQYVALQMMIAKHFGWKVGKFFYFVNNLHIYDNQFEQAEELLRREPVVCQPHLVLNVPNKTNFFDIKPEDFELLDYEPVKPQLKFDLAI.

DUMP is bound at residue 133–134 (RR). The Nucleophile role is filled by C154. Residues 178–181 (RSND), N189, and 219–221 (HIY) contribute to the dUMP site. D181 contributes to the (6R)-5,10-methylene-5,6,7,8-tetrahydrofolate binding site. A278 contributes to the (6R)-5,10-methylene-5,6,7,8-tetrahydrofolate binding site.

This sequence belongs to the thymidylate synthase family. Bacterial-type ThyA subfamily. In terms of assembly, homodimer.

It is found in the cytoplasm. It carries out the reaction dUMP + (6R)-5,10-methylene-5,6,7,8-tetrahydrofolate = 7,8-dihydrofolate + dTMP. The protein operates within pyrimidine metabolism; dTTP biosynthesis. In terms of biological role, catalyzes the reductive methylation of 2'-deoxyuridine-5'-monophosphate (dUMP) to 2'-deoxythymidine-5'-monophosphate (dTMP) while utilizing 5,10-methylenetetrahydrofolate (mTHF) as the methyl donor and reductant in the reaction, yielding dihydrofolate (DHF) as a by-product. This enzymatic reaction provides an intracellular de novo source of dTMP, an essential precursor for DNA biosynthesis. This Streptococcus mutans serotype c (strain ATCC 700610 / UA159) protein is Thymidylate synthase.